A 461-amino-acid chain; its full sequence is Demethyllactenocin mycarosyltransferase (461 aa).

The interval 1–21 (MAGLRPGAGVPPGTPWPISPG) is disordered.

This sequence belongs to the UDP-glycosyltransferase family.

It catalyses the reaction dTDP-beta-L-mycarose + demethyllactenocin = demethylmacrocin + dTDP + H(+). Its function is as follows. Involved in the biosynthesis of mycarose which is a 6-deoxyhexose sugar required during production of the macrolide antibiotic tylosin. Catalyzes the transfer of L-mycarosyl from dTDP-beta-L-mycarose to demethyllactenocin to yield demethylmacrocin. In Streptomyces fradiae (Streptomyces roseoflavus), this protein is Demethyllactenocin mycarosyltransferase (tylCV).